A 30-amino-acid polypeptide reads, in one-letter code: Cyclotide hyen-C (30 aa).

The segment at residues 1–30 is a cross-link (cyclopeptide (Gly-Asn)); it reads GTHPCQETCVTSTRCSTQGCHCNWPICFKN. 3 disulfide bridges follow: Cys-5/Cys-20, Cys-9/Cys-22, and Cys-15/Cys-27.

This is a cyclic peptide. As to expression, detected in stems (at protein level).

In terms of biological role, probably participates in a plant defense mechanism. Does not display any cytotoxic activity towards K562, HeLa, MCF-7, HUVEC or red blood cells. Does not bind to phospholipd membranes containing 1-palmitoyl 2-oleoyl phosphatidylcholine (POPC) or 1-palmitoyl-2-oleophosphatidylethanolamine (POPE). This chain is Cyclotide hyen-C, found in Pigea enneasperma (Spade flower).